Reading from the N-terminus, the 537-residue chain is ATP synthase subunit beta 1 (537 aa).

164–171 is an ATP binding site; the sequence is GGAGVGKT. Positions 471-537 are disordered; that stretch reads PKQSATEKNS…ESLEEPQNGR (67 aa). Polar residues-rich tracts occupy residues 473 to 498 and 507 to 528; these read QSAT…SPGP and IPSS…AQNE.

This sequence belongs to the ATPase alpha/beta chains family. F-type ATPases have 2 components, CF(1) - the catalytic core - and CF(0) - the membrane proton channel. CF(1) has five subunits: alpha(3), beta(3), gamma(1), delta(1), epsilon(1). CF(0) has three main subunits: a(1), b(2) and c(9-12). The alpha and beta chains form an alternating ring which encloses part of the gamma chain. CF(1) is attached to CF(0) by a central stalk formed by the gamma and epsilon chains, while a peripheral stalk is formed by the delta and b chains.

Its subcellular location is the cell inner membrane. The catalysed reaction is ATP + H2O + 4 H(+)(in) = ADP + phosphate + 5 H(+)(out). Its function is as follows. Produces ATP from ADP in the presence of a proton gradient across the membrane. The catalytic sites are hosted primarily by the beta subunits. This Pseudoalteromonas atlantica (strain T6c / ATCC BAA-1087) protein is ATP synthase subunit beta 1.